Consider the following 292-residue polypeptide: Probable starch degradation products transport system permease protein AmyD (292 aa).

The next 6 membrane-spanning stretches (helical) occupy residues 15 to 35 (WLFI…PFII), 77 to 97 (FAVA…MLVT), 110 to 130 (FYLP…FIFV), 156 to 176 (FWGL…VIYI), 205 to 225 (VFPL…SNSF), and 260 to 280 (MAVG…ISVI). Residues 71 to 281 (IIFTAKFAVA…LIIAVISVIQ (211 aa)) form the ABC transmembrane type-1 domain.

Belongs to the binding-protein-dependent transport system permease family. MalFG subfamily.

The protein resides in the cell membrane. In terms of biological role, probably part of a binding-protein-dependent transport system starch degradation products. Probably responsible for the translocation of the substrate across the membrane. The protein is Probable starch degradation products transport system permease protein AmyD (amyD) of Thermoanaerobacterium thermosulfurigenes (Clostridium thermosulfurogenes).